We begin with the raw amino-acid sequence, 413 residues long: Pyruvate dehydrogenase complex subunit homolog DDB_G0271564, mitochondrial (413 aa).

The N-terminal 19 residues, 1–19 (MNRILKQVSNTKGKGIRFY), are a transit peptide targeting the mitochondrion. The region spanning 29–67 (YMFPSVRRLLVEYGINSSKEVTATGPQNRLLKGDVLAYI) is the Peripheral subunit-binding (PSBD) domain.

The protein belongs to the 2-oxoacid dehydrogenase family.

Its subcellular location is the mitochondrion. Functionally, the pyruvate dehydrogenase complex catalyzes the overall conversion of pyruvate to acetyl-CoA and CO(2). It contains multiple copies of three enzymatic components: pyruvate dehydrogenase (E1), dihydrolipoamide acetyltransferase (E2) and lipoamide dehydrogenase (E3). The sequence is that of Pyruvate dehydrogenase complex subunit homolog DDB_G0271564, mitochondrial (pdhX) from Dictyostelium discoideum (Social amoeba).